The primary structure comprises 233 residues: DNA repair protein RecO (233 aa).

The protein belongs to the RecO family.

Functionally, involved in DNA repair and RecF pathway recombination. The sequence is that of DNA repair protein RecO from Pseudomonas aeruginosa (strain LESB58).